Reading from the N-terminus, the 230-residue chain is Somatolactin (230 aa).

The first 23 residues, 1 to 23, serve as a signal peptide directing secretion; the sequence is MMTAVKQSGVWAVLLWPYLLAVS. 3 disulfides stabilise this stretch: C28–C38, C88–C204, and C221–C229. N-linked (GlcNAc...) asparagine glycosylation is found at N34 and N144.

Belongs to the somatotropin/prolactin family. Pituitary gland.

Its subcellular location is the secreted. The protein is Somatolactin of Solea senegalensis (Senegalese sole).